The chain runs to 310 residues: Carbamate kinase 1 (310 aa).

It belongs to the carbamate kinase family.

It is found in the cytoplasm. It carries out the reaction hydrogencarbonate + NH4(+) + ATP = carbamoyl phosphate + ADP + H2O + H(+). The protein operates within metabolic intermediate metabolism; carbamoyl phosphate degradation; CO(2) and NH(3) from carbamoyl phosphate: step 1/1. This chain is Carbamate kinase 1 (arcC1), found in Staphylococcus epidermidis (strain ATCC 12228 / FDA PCI 1200).